The sequence spans 300 residues: UDP-N-acetylenolpyruvoylglucosamine reductase (300 aa).

The region spanning 22–190 (RVGGAAEWLA…LSARFRLQPG (169 aa)) is the FAD-binding PCMH-type domain. The active site involves arginine 169. Serine 220 (proton donor) is an active-site residue. The active site involves glutamate 290.

Belongs to the MurB family. FAD is required as a cofactor.

It is found in the cytoplasm. It carries out the reaction UDP-N-acetyl-alpha-D-muramate + NADP(+) = UDP-N-acetyl-3-O-(1-carboxyvinyl)-alpha-D-glucosamine + NADPH + H(+). It participates in cell wall biogenesis; peptidoglycan biosynthesis. Functionally, cell wall formation. The chain is UDP-N-acetylenolpyruvoylglucosamine reductase from Synechococcus sp. (strain CC9605).